A 341-amino-acid chain; its full sequence is Anthranilate phosphoribosyltransferase (341 aa).

Residues glycine 79, 82 to 83, threonine 87, 89 to 92, 107 to 115, and serine 119 contribute to the 5-phospho-alpha-D-ribose 1-diphosphate site; these read GD, NIST, and KHGNRAVSS. Glycine 79 contacts anthranilate. A Mg(2+)-binding site is contributed by serine 91. Asparagine 110 lines the anthranilate pocket. Position 165 (arginine 165) interacts with anthranilate. Aspartate 224 and glutamate 225 together coordinate Mg(2+).

This sequence belongs to the anthranilate phosphoribosyltransferase family. As to quaternary structure, homodimer. Mg(2+) serves as cofactor.

It carries out the reaction N-(5-phospho-beta-D-ribosyl)anthranilate + diphosphate = 5-phospho-alpha-D-ribose 1-diphosphate + anthranilate. Its pathway is amino-acid biosynthesis; L-tryptophan biosynthesis; L-tryptophan from chorismate: step 2/5. Functionally, catalyzes the transfer of the phosphoribosyl group of 5-phosphorylribose-1-pyrophosphate (PRPP) to anthranilate to yield N-(5'-phosphoribosyl)-anthranilate (PRA). This chain is Anthranilate phosphoribosyltransferase, found in Bacillus cereus (strain AH187).